Reading from the N-terminus, the 356-residue chain is Tyrosine recombinase XerS (356 aa).

In terms of domain architecture, Core-binding (CB) spans 16–121 (IMPWYVLDYY…ALSSLYKYLT (106 aa)). The Tyr recombinase domain maps to 169 to 354 (AFLDYVDKEY…VNDEQKNALD (186 aa)). Active-site residues include Arg210, Lys234, His306, Arg309, and His332. Catalysis depends on Tyr341, which acts as the O-(3'-phospho-DNA)-tyrosine intermediate.

It belongs to the 'phage' integrase family. XerS subfamily.

The protein localises to the cytoplasm. Its activity is regulated as follows. FtsK is required for recombination. Its function is as follows. Site-specific tyrosine recombinase, which acts by catalyzing the cutting and rejoining of the recombining DNA molecules. Essential to convert dimers of the bacterial chromosome into monomers to permit their segregation at cell division. This is Tyrosine recombinase XerS from Streptococcus equi subsp. equi (strain 4047).